We begin with the raw amino-acid sequence, 725 residues long: N-alpha-acetyltransferase 35, NatC auxiliary subunit (725 aa).

At serine 187 the chain carries Phosphoserine. Positions 548-573 (ERIMEEQQKGRSSKKTKKKKKVRPLS) are disordered. Basic residues predominate over residues 558 to 571 (RSSKKTKKKKKVRP).

This sequence belongs to the MAK10 family. In terms of assembly, component of the N-terminal acetyltransferase C (NatC) complex, which is composed of NAA35, NAA38 and NAA30.

The protein resides in the cytoplasm. Auxillary component of the N-terminal acetyltransferase C (NatC) complex which catalyzes acetylation of N-terminal methionine residues. N-terminal acetylation protects proteins from ubiquitination and degradation by the N-end rule pathway. Involved in regulation of apoptosis and proliferation of smooth muscle cells. The protein is N-alpha-acetyltransferase 35, NatC auxiliary subunit (NAA35) of Macaca fascicularis (Crab-eating macaque).